Here is a 141-residue protein sequence, read N- to C-terminus: Small ribosomal subunit protein uS12 (141 aa).

This sequence belongs to the universal ribosomal protein uS12 family. As to quaternary structure, part of the 30S ribosomal subunit.

Its function is as follows. With S4 and S5 plays an important role in translational accuracy. Located at the interface of the 30S and 50S subunits. This is Small ribosomal subunit protein uS12 from Methanobrevibacter smithii (strain ATCC 35061 / DSM 861 / OCM 144 / PS).